We begin with the raw amino-acid sequence, 577 residues long: MFS-type transporter CPUR_05422 (577 aa).

A disordered region spans residues 1 to 49 (MSAMSAMGKPEHGSATTSDLEHRATESSLEKQDVEAAPPGPVKPVDPSP). Positions 19–34 (DLEHRATESSLEKQDV) are enriched in basic and acidic residues. Residues 38-47 (PPGPVKPVDP) are compositionally biased toward pro residues. 14 helical membrane-spanning segments follow: residues 52 to 72 (STLKTTLLLASVFLAMFLVAV), 93 to 113 (DVGWYGSIYLLTCCAFQLLFG), 123 to 143 (VVLLVSLVIFLAASALCGAAP), 157 to 177 (VGSAGIFAGNIVAIVHTIPLA), 184 to 204 (GLMGAVMGLATIIGPLIGGAF), 212 to 232 (WCFYINLPFGGLALVAIFFYF), 249 to 269 (ILSLDIPGTILLVPAIVCLLL), 285 to 305 (IIVLLTLMAVLFVAFIAVQIC), 326 to 346 (FLTTIAIGSAQYIFVYYIPIW), 359 to 379 (GIQLLPLMISFVVASIVGGLL), 383 to 403 (IGYYTALGIFGSSVMAVGAGL), 416 to 436 (VIGYQILFGFGMGLAFQTPNL), 449 to 469 (MGIALMFFGQLLSAAIFVAVG), and 525 to 545 (VFIVGLAMSCVGVVGTSCMEW). Residues 554-577 (PPAGPPAGAPTESAPVETKAAGHT) form a disordered region.

Belongs to the major facilitator superfamily. TCR/Tet family.

It is found in the membrane. In terms of biological role, MFS-type transporter; part of the ergochrome gene cluster responsible for the typical purple-black color of the ergot sclerotia. The ergochrome gene cluster produces several ergot pigments including the yellow ergochrome secalonic acid and its derivatives, as well as the red anthraquinones endocrocin and clavorubin. This Claviceps purpurea (strain 20.1) (Ergot fungus) protein is MFS-type transporter CPUR_05422.